Here is a 59-residue protein sequence, read N- to C-terminus: Large ribosomal subunit protein bL32 (59 aa).

Positions 1–59 (MAVQQNRKTPSKRGMRRSHDSLSKPTLSTEQNTGETHRRHHISADGYYRGRKVTRGQDD) are disordered. The segment covering 23-34 (SKPTLSTEQNTG) has biased composition (polar residues). Over residues 49–59 (RGRKVTRGQDD) the composition is skewed to basic residues.

It belongs to the bacterial ribosomal protein bL32 family.

The sequence is that of Large ribosomal subunit protein bL32 from Halorhodospira halophila (strain DSM 244 / SL1) (Ectothiorhodospira halophila (strain DSM 244 / SL1)).